A 216-amino-acid chain; its full sequence is Large ribosomal subunit protein uL3 (216 aa).

Glutamine 157 carries the N5-methylglutamine modification.

It belongs to the universal ribosomal protein uL3 family. Part of the 50S ribosomal subunit. Forms a cluster with proteins L14 and L19. In terms of processing, methylated by PrmB.

Functionally, one of the primary rRNA binding proteins, it binds directly near the 3'-end of the 23S rRNA, where it nucleates assembly of the 50S subunit. The sequence is that of Large ribosomal subunit protein uL3 from Xanthomonas oryzae pv. oryzae (strain MAFF 311018).